The sequence spans 224 residues: Adenylate kinase (224 aa).

ATP is bound at residue 10–15; the sequence is GSGKGT. Residues 30–59 form an NMP region; sequence ESGAIFRDNIKGGTDLGMKAKAYIDKGDLV. AMP-binding positions include Ser31, Arg36, 57 to 59, 85 to 88, and Gln92; these read DLV and GFPR. The interval 126 to 165 is LID; sequence GRRLCENDNNHPNNIFIDAIKPNGDKCRVCGGALSSRADD. An ATP-binding site is contributed by Arg127. 2 residues coordinate AMP: Arg162 and Arg174. Asn211 is an ATP binding site.

It belongs to the adenylate kinase family. In terms of assembly, monomer.

It localises to the cytoplasm. It catalyses the reaction AMP + ATP = 2 ADP. It participates in purine metabolism; AMP biosynthesis via salvage pathway; AMP from ADP: step 1/1. Catalyzes the reversible transfer of the terminal phosphate group between ATP and AMP. Plays an important role in cellular energy homeostasis and in adenine nucleotide metabolism. This Desulforapulum autotrophicum (strain ATCC 43914 / DSM 3382 / VKM B-1955 / HRM2) (Desulfobacterium autotrophicum) protein is Adenylate kinase.